Reading from the N-terminus, the 444-residue chain is Phosphoribosylamine--glycine ligase (444 aa).

One can recognise an ATP-grasp domain in the interval 109 to 324 (RNLFKKYEID…FLDVCFAIAE (216 aa)). 140–202 (MTSLGKDVVV…EEKLVGVEFT (63 aa)) serves as a coordination point for ATP. Residues glutamine 282, glutamate 294, and asparagine 296 each coordinate Mg(2+). Residues glutamine 282, glutamate 294, and asparagine 296 each coordinate Mn(2+).

This sequence belongs to the GARS family. Mg(2+) serves as cofactor. It depends on Mn(2+) as a cofactor.

The catalysed reaction is 5-phospho-beta-D-ribosylamine + glycine + ATP = N(1)-(5-phospho-beta-D-ribosyl)glycinamide + ADP + phosphate + H(+). Its pathway is purine metabolism; IMP biosynthesis via de novo pathway; N(1)-(5-phospho-D-ribosyl)glycinamide from 5-phospho-alpha-D-ribose 1-diphosphate: step 2/2. This Methanococcus maripaludis (strain C5 / ATCC BAA-1333) protein is Phosphoribosylamine--glycine ligase.